The sequence spans 722 residues: ORC ubiquitin ligase 1 (722 aa).

The RING-type; degenerate zinc finger occupies 18–56 (CHICLGKVRQPVVCTNNHVFCSICIDLWLKNNSQCPACR). Coiled-coil stretches lie at residues 87 to 129 (LRKT…TILD) and 157 to 267 (VVEW…KEDV). S210 is modified (phosphoserine). The disordered stretch occupies residues 273–359 (RAPSADSKGP…RLGARETPMD (87 aa)). Low complexity predominate over residues 302 to 319 (AGSASASHLASPSSSRLA). Residues 323-338 (SVRQESTSRTEPNCPQ) are compositionally biased toward polar residues. Basic and acidic residues predominate over residues 339-359 (NKDRYPKPTEPRLGARETPMD). S522, S549, S557, S564, and S566 each carry phosphoserine. The span at 541–555 (MSESDNSKSPCNNGF) shows a compositional bias: polar residues. 2 disordered regions span residues 541-585 (MSES…GSKL) and 691-722 (VPEKRSKNGNQSTKRKIQSSLANASPSKATKS). Over residues 571 to 581 (EFLEEPDKLQE) the composition is skewed to basic and acidic residues. The span at 698–722 (NGNQSTKRKIQSSLANASPSKATKS) shows a compositional bias: polar residues. Phosphoserine is present on residues S715 and S717.

In terms of assembly, associates with ORC complex. Binds to chromatin; association is cell cycle-regulated, absent from mitotic chromosomes, is associated with chromatin from G1 and partially released from chromatin from mid S-phase. In terms of processing, auto-ubiquitinated.

The protein localises to the chromosome. The enzyme catalyses S-ubiquitinyl-[E2 ubiquitin-conjugating enzyme]-L-cysteine + [acceptor protein]-L-lysine = [E2 ubiquitin-conjugating enzyme]-L-cysteine + N(6)-ubiquitinyl-[acceptor protein]-L-lysine.. Its function is as follows. E3 ubiquitin ligase essential for DNA replication origin activation during S phase. Acts as a replication origin selector which selects the origins to be fired and catalyzes the multi-mono-ubiquitination of a subset of chromatin-bound ORC3 and ORC5 during S-phase. This chain is ORC ubiquitin ligase 1, found in Mus musculus (Mouse).